The following is a 144-amino-acid chain: Cytochrome c oxidase subunit 4 isoform 1, mitochondrial (144 aa).

Residues 1–73 (SVVKSEDFSL…SFAEMNRGSN (73 aa)) lie on the Mitochondrial matrix side of the membrane. The residue at position 4 (K4) is an N6-acetyllysine; alternate. Position 4 is an N6-succinyllysine; alternate (K4). K28 carries the N6-acetyllysine modification. Phosphoserine is present on residues S31 and S33. K35 bears the N6-acetyllysine; alternate mark. K35 bears the N6-succinyllysine; alternate mark. K42 carries the post-translational modification N6-acetyllysine. A helical transmembrane segment spans residues 74 to 99 (EWKTVVGGAMFFIGFTALVIMWQKHY). Over 100 to 144 (VYGPLPQSFDKEWVAKQTKRMLDMKVNPIQGLASKWDYEKNEWKK) the chain is Mitochondrial intermembrane.

It belongs to the cytochrome c oxidase IV family. Component of the cytochrome c oxidase (complex IV, CIV), a multisubunit enzyme composed of 14 subunits. The complex is composed of a catalytic core of 3 subunits MT-CO1, MT-CO2 and MT-CO3, encoded in the mitochondrial DNA, and 11 supernumerary subunits COX4I, COX5A, COX5B, COX6A, COX6B, COX6C, COX7A, COX7B, COX7C, COX8 and NDUFA4, which are encoded in the nuclear genome. The complex exists as a monomer or a dimer and forms supercomplexes (SCs) in the inner mitochondrial membrane with NADH-ubiquinone oxidoreductase (complex I, CI) and ubiquinol-cytochrome c oxidoreductase (cytochrome b-c1 complex, complex III, CIII), resulting in different assemblies (supercomplex SCI(1)III(2)IV(1) and megacomplex MCI(2)III(2)IV(2)). Interacts with PHB2; the interaction decreases in absence of SPHK2. Interacts with AFG1L. Interacts with ABCB7; this interaction allows the regulation of cellular iron homeostasis and cellular reactive oxygen species (ROS) levels in cardiomyocytes. Interacts with FLVCR2; this interaction occurs in the absence of heme and is disrupted upon heme binding. Interacts with IRGC.

Its subcellular location is the mitochondrion inner membrane. Its pathway is energy metabolism; oxidative phosphorylation. In terms of biological role, component of the cytochrome c oxidase, the last enzyme in the mitochondrial electron transport chain which drives oxidative phosphorylation. The respiratory chain contains 3 multisubunit complexes succinate dehydrogenase (complex II, CII), ubiquinol-cytochrome c oxidoreductase (cytochrome b-c1 complex, complex III, CIII) and cytochrome c oxidase (complex IV, CIV), that cooperate to transfer electrons derived from NADH and succinate to molecular oxygen, creating an electrochemical gradient over the inner membrane that drives transmembrane transport and the ATP synthase. Cytochrome c oxidase is the component of the respiratory chain that catalyzes the reduction of oxygen to water. Electrons originating from reduced cytochrome c in the intermembrane space (IMS) are transferred via the dinuclear copper A center (CU(A)) of subunit 2 and heme A of subunit 1 to the active site in subunit 1, a binuclear center (BNC) formed by heme A3 and copper B (CU(B)). The BNC reduces molecular oxygen to 2 water molecules using 4 electrons from cytochrome c in the IMS and 4 protons from the mitochondrial matrix. This is Cytochrome c oxidase subunit 4 isoform 1, mitochondrial (COX4I1) from Gorilla gorilla gorilla (Western lowland gorilla).